We begin with the raw amino-acid sequence, 1256 residues long: Protein flightless-1 (1256 aa).

15 LRR repeats span residues 4–28, 29–51, 52–74, 75–99, 100–122, 124–145, 147–169, 171–192, 218–241, 243–264, 265–287, 289–312, 313–335, 336–358, and 360–381; these read LPFV…MRQM, SRVQ…LGHL, QKLE…LTEL, SCLR…LFHL, EELT…LERA, NLIV…LFIH, TDLL…TRRL, NLKT…QLPS, LANL…VYNV, TLVR…VELW, QRLE…LCKL, KLRR…IGKL, GALE…LCRC, GALK…IHLL, and GLDQ…PSEA. The interval 405 to 476 is disordered; that stretch reads AAVPPSMPSS…ESLKPKRWDE (72 aa). The span at 431 to 476 shows a compositional bias: basic and acidic residues; that stretch reads PRSEGDQDAAKVLKGMKDVAKDKDNEAGAVPEDGKPESLKPKRWDE. 4 Gelsolin-like repeats span residues 512-589, 633-703, 749-822, and 1168-1242; these read IEEV…EQFL, EPVA…AEFW, VELP…MQIF, and EKCA…SRRF.

This sequence belongs to the villin/gelsolin family. In terms of tissue distribution, found in ovaries, larval fat bodies, brain and adult thorax.

Its function is as follows. May play a key role in embryonic cellularization by interacting with both the cytoskeleton and other cellular components. Alternatively, it may play a structural role in indirect flight muscle. Vital for embryonic development. This is Protein flightless-1 (fliI) from Drosophila melanogaster (Fruit fly).